We begin with the raw amino-acid sequence, 265 residues long: Hemin import ATP-binding protein HmuV (265 aa).

Residues 13–249 (LKASNLHLQL…TAVENVYGWP (237 aa)) enclose the ABC transporter domain. 45–52 (GPNGAGKS) is a binding site for ATP.

It belongs to the ABC transporter superfamily. Heme (hemin) importer (TC 3.A.1.14.5) family. As to quaternary structure, the complex is composed of two ATP-binding proteins (HmuV), two transmembrane proteins (HmuU) and a solute-binding protein (HmuT).

Its subcellular location is the cell inner membrane. Its function is as follows. Part of the ABC transporter complex HmuTUV involved in hemin import. Responsible for energy coupling to the transport system. The polypeptide is Hemin import ATP-binding protein HmuV (Photobacterium damsela subsp. piscicida (Pasteurella piscicida)).